A 487-amino-acid polypeptide reads, in one-letter code: Signal recognition particle subunit SRP54 (487 aa).

The segment at 1 to 295 (MVLSQLGSSL…DAESFVRKLL (295 aa)) is G-domain. Residues 108-115 (GLQGAGKT), 190-194 (DTSGR), and 248-251 (TKLD) each bind GTP. The interval 296–487 (GMGDLKGIAK…LGGTGKKGKK (192 aa)) is M-domain.

Belongs to the GTP-binding SRP family. SRP54 subfamily. As to quaternary structure, component of a signal recognition particle (SRP) complex that consists of a 7SL RNA molecule of 300 nucleotides and six protein subunits: SRP72, SRP68, SRP54, SRP19, SRP14 and SRP9.

It localises to the cytoplasm. Its subcellular location is the endoplasmic reticulum. The catalysed reaction is GTP + H2O = GDP + phosphate + H(+). Its function is as follows. Component of the signal recognition particle (SRP) complex, a ribonucleoprotein complex that mediates the cotranslational targeting of secretory and membrane proteins to the endoplasmic reticulum (ER). As part of the SRP complex, associates with the SRP receptor (SR) component SRPRA to target secretory proteins to the endoplasmic reticulum membrane. Binds to the signal sequence of presecretory proteins when they emerge from the ribosomes. Displays basal GTPase activity, and stimulates reciprocal GTPase activation of the SR subunit SRPRA. Forms a guanosine 5'-triphosphate (GTP)-dependent complex with the SR subunit SRPRA. SR compaction and GTPase mediated rearrangement of SR drive SRP-mediated cotranslational protein translocation into the ER. Requires the presence of SRP9/SRP14 and/or SRP19 to stably interact with RNA. The polypeptide is Signal recognition particle subunit SRP54 (Entamoeba histolytica (strain ATCC 30459 / HM-1:IMSS / ABRM)).